A 459-amino-acid chain; its full sequence is Lipase 4 (459 aa).

The N-terminal stretch at 1–14 is a signal peptide; the sequence is MLFLLFLLVAPIYA. Cys110 and Cys281 are joined by a disulfide. The active-site Charge relay system is the Ser194. Asn229 and Asn266 each carry an N-linked (GlcNAc...) asparagine glycan. Catalysis depends on charge relay system residues Asp343 and His376. Cys359 and Cys404 are disulfide-bonded.

The protein belongs to the AB hydrolase superfamily. Lipase family. Class Lip subfamily.

The protein localises to the secreted. It catalyses the reaction a triacylglycerol + H2O = a diacylglycerol + a fatty acid + H(+). Secreted lipase that is able to hydrolyze both the neutral triacylglycerols and the monopalmitate ester Tween 40, allowing the use of hydrolyzed products as carbon sources. Has broad lipolytic activity, which may be important for colonization and subsequent infection, therefore contributing to the persistence and virulence in human tissue. This is Lipase 4 from Candida albicans (strain SC5314 / ATCC MYA-2876) (Yeast).